We begin with the raw amino-acid sequence, 397 residues long: Acetate kinase (397 aa).

Asparagine 8 is a binding site for Mg(2+). Lysine 15 serves as a coordination point for ATP. Arginine 89 serves as a coordination point for substrate. Aspartate 146 functions as the Proton donor/acceptor in the catalytic mechanism. Residues 206–210 (HLGNG), 281–283 (DLR), and 329–333 (GVGEN) contribute to the ATP site. Glutamate 382 provides a ligand contact to Mg(2+).

It belongs to the acetokinase family. Homodimer. The cofactor is Mg(2+). Requires Mn(2+) as cofactor.

It is found in the cytoplasm. The enzyme catalyses acetate + ATP = acetyl phosphate + ADP. The protein operates within metabolic intermediate biosynthesis; acetyl-CoA biosynthesis; acetyl-CoA from acetate: step 1/2. In terms of biological role, catalyzes the formation of acetyl phosphate from acetate and ATP. Can also catalyze the reverse reaction. The sequence is that of Acetate kinase from Bacillus anthracis.